The following is a 279-amino-acid chain: Cell division protein FtsQ (279 aa).

The disordered stretch occupies residues 1–28; it reads MTPMKKQLDKSLGSRRGATATRAKERAD. Residues 1 to 48 lie on the Cytoplasmic side of the membrane; the sequence is MTPMKKQLDKSLGSRRGATATRAKERADNRNTGPAAIVRLLAFIPWNR. The helical transmembrane segment at 49 to 69 threads the bilayer; sequence VLLHVSIFCFWLLVLSALIAG. Over 70-279 the chain is Periplasmic; that stretch reads VKWLDRPVAT…WKADVTPEQG (210 aa). Positions 75 to 144 constitute a POTRA domain; it reads RPVATVQVVG…DAVQVDLEEE (70 aa).

This sequence belongs to the FtsQ/DivIB family. FtsQ subfamily. In terms of assembly, part of a complex composed of FtsB, FtsL and FtsQ.

It is found in the cell inner membrane. Its function is as follows. Essential cell division protein. May link together the upstream cell division proteins, which are predominantly cytoplasmic, with the downstream cell division proteins, which are predominantly periplasmic. May control correct divisome assembly. This Hahella chejuensis (strain KCTC 2396) protein is Cell division protein FtsQ.